The following is a 124-amino-acid chain: Large ribosomal subunit protein bL12 (124 aa).

This sequence belongs to the bacterial ribosomal protein bL12 family. As to quaternary structure, homodimer. Part of the ribosomal stalk of the 50S ribosomal subunit. Forms a multimeric L10(L12)X complex, where L10 forms an elongated spine to which 2 to 4 L12 dimers bind in a sequential fashion. Binds GTP-bound translation factors.

Forms part of the ribosomal stalk which helps the ribosome interact with GTP-bound translation factors. Is thus essential for accurate translation. The polypeptide is Large ribosomal subunit protein bL12 (Chlorobium chlorochromatii (strain CaD3)).